We begin with the raw amino-acid sequence, 473 residues long: PEP-dependent dihydroxyacetone kinase, phosphoryl donor subunit DhaM (473 aa).

Positions 1 to 137 constitute a PTS EIIA type-4 domain; it reads MVNLVIVSHS…LAAKQAQLGI (137 aa). H9 (tele-phosphohistidine intermediate) is an active-site residue. In terms of domain architecture, HPr spans 155-242; it reads ARSVTVTIRN…SLAAEDFGEH (88 aa). H169 serves as the catalytic Pros-phosphohistidine intermediate. Residues 266–472 form a PTS EI-like, N-terminal part region; the sequence is PLPLAQPARH…IDPAAQRVSC (207 aa). H432 functions as the Tele-phosphohistidine intermediate in the catalytic mechanism.

This sequence belongs to the PEP-utilizing enzyme family. As to quaternary structure, homodimer. The dihydroxyacetone kinase complex is composed of a homodimer of DhaM, a homodimer of DhaK and the subunit DhaL.

The catalysed reaction is dihydroxyacetone + phosphoenolpyruvate = dihydroxyacetone phosphate + pyruvate. Its function is as follows. Component of the dihydroxyacetone kinase complex, which is responsible for the phosphoenolpyruvate (PEP)-dependent phosphorylation of dihydroxyacetone. DhaM serves as the phosphoryl donor. Is phosphorylated by phosphoenolpyruvate in an EI- and HPr-dependent reaction, and a phosphorelay system on histidine residues finally leads to phosphoryl transfer to DhaL and dihydroxyacetone. In Pantoea ananatis (strain LMG 20103), this protein is PEP-dependent dihydroxyacetone kinase, phosphoryl donor subunit DhaM.